Reading from the N-terminus, the 182-residue chain is Ribulose bisphosphate carboxylase small subunit, chloroplastic 5 (182 aa).

The transit peptide at 1-49 directs the protein to the chloroplast; the sequence is MASSLMSNAATTMAAATTTAQANMVAPFNGLKSISAFPVTRKNNDITSV.

Belongs to the RuBisCO small chain family. In terms of assembly, heterohexadecamer of 8 large and 8 small subunits.

The protein localises to the plastid. The protein resides in the chloroplast. RuBisCO catalyzes two reactions: the carboxylation of D-ribulose 1,5-bisphosphate, the primary event in carbon dioxide fixation, as well as the oxidative fragmentation of the pentose substrate. Both reactions occur simultaneously and in competition at the same active site. Although the small subunit is not catalytic it is essential for maximal activity. The sequence is that of Ribulose bisphosphate carboxylase small subunit, chloroplastic 5 from Mesembryanthemum crystallinum (Common ice plant).